The sequence spans 209 residues: Ribosomal RNA large subunit methyltransferase E (209 aa).

Positions 63, 65, 83, 99, and 124 each coordinate S-adenosyl-L-methionine. Lys164 acts as the Proton acceptor in catalysis.

Belongs to the class I-like SAM-binding methyltransferase superfamily. RNA methyltransferase RlmE family.

It is found in the cytoplasm. It carries out the reaction uridine(2552) in 23S rRNA + S-adenosyl-L-methionine = 2'-O-methyluridine(2552) in 23S rRNA + S-adenosyl-L-homocysteine + H(+). Specifically methylates the uridine in position 2552 of 23S rRNA at the 2'-O position of the ribose in the fully assembled 50S ribosomal subunit. This is Ribosomal RNA large subunit methyltransferase E from Serratia proteamaculans (strain 568).